Consider the following 174-residue polypeptide: Small ribosomal subunit protein uS5 (174 aa).

An S5 DRBM domain is found at 20 to 83 (IEDQLVAINR…EAGKKRMIKV (64 aa)).

The protein belongs to the universal ribosomal protein uS5 family. Part of the 30S ribosomal subunit. Contacts proteins S4 and S8.

In terms of biological role, with S4 and S12 plays an important role in translational accuracy. Located at the back of the 30S subunit body where it stabilizes the conformation of the head with respect to the body. This Lactobacillus gasseri (strain ATCC 33323 / DSM 20243 / BCRC 14619 / CIP 102991 / JCM 1131 / KCTC 3163 / NCIMB 11718 / NCTC 13722 / AM63) protein is Small ribosomal subunit protein uS5.